The chain runs to 463 residues: Asparagine--tRNA ligase (463 aa).

This sequence belongs to the class-II aminoacyl-tRNA synthetase family. As to quaternary structure, homodimer.

It localises to the cytoplasm. It carries out the reaction tRNA(Asn) + L-asparagine + ATP = L-asparaginyl-tRNA(Asn) + AMP + diphosphate + H(+). In Acholeplasma laidlawii (strain PG-8A), this protein is Asparagine--tRNA ligase.